Here is a 345-residue protein sequence, read N- to C-terminus: GDP-mannose transporter (345 aa).

The Cytoplasmic segment spans residues methionine 1–arginine 8. The helical transmembrane segment at isoleucine 9 to leucine 29 threads the bilayer. Topologically, residues threonine 30–tyrosine 40 are lumenal. A helical transmembrane segment spans residues asparagine 41–leucine 61. At lysine 62–lysine 78 the chain is on the cytoplasmic side. Residues phenylalanine 79–leucine 101 form a helical membrane-spanning segment. Topologically, residues serine 102–proline 104 are lumenal. Residues valine 105–glycine 127 form a helical membrane-spanning segment. At histidine 128–alanine 131 the chain is on the cytoplasmic side. A helical transmembrane segment spans residues leucine 132–alanine 150. Topologically, residues aspartate 151–threonine 161 are lumenal. The chain crosses the membrane as a helical span at residues leucine 162–alanine 182. The Cytoplasmic segment spans residues methionine 183–aspartate 194. The chain crosses the membrane as a helical span at residues phenylalanine 195 to phenylalanine 215. Residues threonine 216–lysine 233 lie on the Lumenal side of the membrane. The chain crosses the membrane as a helical span at residues phenylalanine 234–serine 254. At alanine 255–threonine 264 the chain is on the cytoplasmic side. Residues threonine 265 to phenylalanine 285 form a helical membrane-spanning segment. The Lumenal portion of the chain corresponds to aspartate 286–proline 288. The chain crosses the membrane as a helical span at residues isoleucine 289–valine 309. Over alanine 310–serine 345 the chain is Cytoplasmic. The interval aspartate 319–serine 345 is disordered. The segment covering asparagine 329–serine 345 has biased composition (polar residues).

Belongs to the TPT transporter family. SLC35D subfamily. As to quaternary structure, homooligomer.

The protein resides in the golgi apparatus membrane. Its subcellular location is the cytoplasmic vesicle membrane. It is found in the endoplasmic reticulum membrane. Its function is as follows. Involved in the import of GDP-mannose from the cytoplasm into the Golgi lumen. This Schizosaccharomyces pombe (strain 972 / ATCC 24843) (Fission yeast) protein is GDP-mannose transporter (vrg4).